Reading from the N-terminus, the 341-residue chain is N-acetyl-gamma-glutamyl-phosphate reductase (341 aa).

Cys147 is an active-site residue.

The protein belongs to the NAGSA dehydrogenase family. Type 1 subfamily.

It is found in the cytoplasm. It catalyses the reaction N-acetyl-L-glutamate 5-semialdehyde + phosphate + NADP(+) = N-acetyl-L-glutamyl 5-phosphate + NADPH + H(+). The protein operates within amino-acid biosynthesis; L-arginine biosynthesis; N(2)-acetyl-L-ornithine from L-glutamate: step 3/4. In terms of biological role, catalyzes the NADPH-dependent reduction of N-acetyl-5-glutamyl phosphate to yield N-acetyl-L-glutamate 5-semialdehyde. This is N-acetyl-gamma-glutamyl-phosphate reductase from Dehalococcoides mccartyi (strain ATCC BAA-2266 / KCTC 15142 / 195) (Dehalococcoides ethenogenes (strain 195)).